Here is a 427-residue protein sequence, read N- to C-terminus: 3-phosphoshikimate 1-carboxyvinyltransferase (427 aa).

3-phosphoshikimate is bound by residues K20, S21, and R25. Position 20 (K20) interacts with phosphoenolpyruvate. Residues G92 and R120 each contribute to the phosphoenolpyruvate site. The 3-phosphoshikimate site is built by S166, Q168, D312, and K339. Position 168 (Q168) interacts with phosphoenolpyruvate. The active-site Proton acceptor is D312. Positions 343 and 385 each coordinate phosphoenolpyruvate.

This sequence belongs to the EPSP synthase family. As to quaternary structure, monomer.

The protein localises to the cytoplasm. It catalyses the reaction 3-phosphoshikimate + phosphoenolpyruvate = 5-O-(1-carboxyvinyl)-3-phosphoshikimate + phosphate. It functions in the pathway metabolic intermediate biosynthesis; chorismate biosynthesis; chorismate from D-erythrose 4-phosphate and phosphoenolpyruvate: step 6/7. Its function is as follows. Catalyzes the transfer of the enolpyruvyl moiety of phosphoenolpyruvate (PEP) to the 5-hydroxyl of shikimate-3-phosphate (S3P) to produce enolpyruvyl shikimate-3-phosphate and inorganic phosphate. The polypeptide is 3-phosphoshikimate 1-carboxyvinyltransferase (Streptococcus pyogenes serotype M49 (strain NZ131)).